Reading from the N-terminus, the 205-residue chain is Small ribosomal subunit protein uS4 (205 aa).

Residues 94-172 (SRLDSIVYRM…TTPDYVSFDV (79 aa)) form the S4 RNA-binding domain.

The protein belongs to the universal ribosomal protein uS4 family. As to quaternary structure, part of the 30S ribosomal subunit. Contacts protein S5. The interaction surface between S4 and S5 is involved in control of translational fidelity.

Functionally, one of the primary rRNA binding proteins, it binds directly to 16S rRNA where it nucleates assembly of the body of the 30S subunit. Its function is as follows. With S5 and S12 plays an important role in translational accuracy. In Rickettsia bellii (strain OSU 85-389), this protein is Small ribosomal subunit protein uS4.